The following is a 505-amino-acid chain: Probable alpha-L-arabinofuranosidase C (505 aa).

Residues Asn-152, Asn-181, and Asn-269 are each glycosylated (N-linked (GlcNAc...) asparagine).

The protein belongs to the glycosyl hydrolase 51 family.

The protein resides in the secreted. The enzyme catalyses Hydrolysis of terminal non-reducing alpha-L-arabinofuranoside residues in alpha-L-arabinosides.. It functions in the pathway glycan metabolism; L-arabinan degradation. Functionally, alpha-L-arabinofuranosidase involved in the degradation of arabinoxylan, a major component of plant hemicellulose. Acts only on small linear 1,5-alpha-linked L-arabinofuranosyl oligosaccharides. This Aspergillus niger (strain ATCC MYA-4892 / CBS 513.88 / FGSC A1513) protein is Probable alpha-L-arabinofuranosidase C (abfC).